The following is a 519-amino-acid chain: MALANFIDRAATAASQVLTDFHLGDFKAALEKQVVAVAFDDQAASCAEGQATLDLAVRLLARLYPVLAILPLDSASSFQAQALERLAKSINPKIGIRRSGKSAMVCLVAGATRPSLRCTTFFIGSDGWAAKLSRTDPVGSGSSLLPYGAGAASCFGAANVFRTIFAAQLTGAELDPDIDLSLYSYNKTKARDARPVDLPVDLGETHLVGLGAIGHGALWALARQSGLSGRLHVVDHEAVELSNLQRYVLAGQAEIGMSKAVLATTALRSTALEVEAHPLKWAEHVARRGDWIFDRVGVALDTAADRLAVQGALPRWIANAWTQEHDLGISRHGFDDGQACLCCMYMPSGKSKDEHQLIAEELGIPETHEQVKALLQTNAGVPNDFVVRVATAMGVPFEPLAPFVGQPLRSFYQQAICGGLVFQLSDGSRLVRTVVPMAFQSALAGIMLAAELVKHSAGFPMSPTTSTRVNLLRPLGSHLHDPKAKDSSGRCICSDEDFISAYRRKYGNSVEPLSNISAT.

The next 4 membrane-spanning stretches (helical) occupy residues 141 to 161 (GSSL…ANVF), 202 to 222 (LGET…WALA), 385 to 405 (FVVR…PFVG), and 433 to 453 (TVVP…AELV).

It is found in the cell membrane. This is an uncharacterized protein from Sinorhizobium fredii (strain NBRC 101917 / NGR234).